The sequence spans 887 residues: Ubiquitin carboxyl-terminal hydrolase 4 (887 aa).

The region spanning 202 to 328 (KEDSLLLIDV…WIKNGGEIDK (127 aa)) is the Rhodanese domain. 2 disordered regions span residues 358–465 (AFPD…PKPP) and 484–505 (QKQNRSRSLEPQLPPIPSTLIR). The span at 387–402 (TPPNGSSTLGRINSPV) shows a compositional bias: polar residues. One can recognise a USP domain in the interval 525–885 (VGLENMGNSC…SAYVLFYHRI (361 aa)). Residue Cys-534 is the Nucleophile of the active site. The Proton acceptor role is filled by His-842.

This sequence belongs to the peptidase C19 family.

It localises to the cytoplasm. Its subcellular location is the late endosome membrane. The catalysed reaction is Thiol-dependent hydrolysis of ester, thioester, amide, peptide and isopeptide bonds formed by the C-terminal Gly of ubiquitin (a 76-residue protein attached to proteins as an intracellular targeting signal).. With respect to regulation, RFU1 is an inhibitor of deubiquitination activity. In terms of biological role, ubiquitin thioesterase that acts at the late endosome/prevacuolar compartment to recover ubiquitin from ubiquitinated membrane proteins en route to the vacuole. Also removes ubiquitin from soluble proteins targeted to proteasomes. Is essential to maintain a normal level of free ubiquitin. Required for promoting coordination of DNA replication and avoids DNA overreplication. The chain is Ubiquitin carboxyl-terminal hydrolase 4 (DOA4) from Candida glabrata (strain ATCC 2001 / BCRC 20586 / JCM 3761 / NBRC 0622 / NRRL Y-65 / CBS 138) (Yeast).